The primary structure comprises 80 residues: CLAVATA3/ESR (CLE)-related protein 14 (80 aa).

The signal sequence occupies residues 1 to 26 (MKVWSQRLSFLIVMIFILAGLHSSSA). Residues Pro71 and Pro74 each carry the hydroxyproline modification. A glycan (O-linked (Ara...) hydroxyproline) is linked at Pro74.

The protein belongs to the CLV3/ESR signal peptide family. As to quaternary structure, interacts with the extracellular leucine-rich repeat region of CLV2 and PEPR2. The O-glycosylation (arabinosylation) of the hydroxyproline Pro-74 enhances binding affinity of the CLE14p peptide for its receptor. As to expression, mostly expressed in roots, and, to a lower extent, in seedlings and leaves. Expressed in the primary root tip under Pi deficiency.

It localises to the secreted. The protein localises to the extracellular space. Functionally, extracellular signal peptide that regulates cell fate. Represses root apical meristem maintenance. Acts as an elicitor of the root meristem differentiation through the CLV2/CRN complex signaling pathway. Inhibits irreversibly root growth by reducing cell division rates in the root apical meristem. Regulates the transition of protophloem cells from proliferation to differentiation, thus impinging on postembryonic growth capacity of the root meristem; this signaling pathway requires CRN and CLV2. This is CLAVATA3/ESR (CLE)-related protein 14 from Arabidopsis thaliana (Mouse-ear cress).